Consider the following 447-residue polypeptide: Peptide chain release factor 1, mitochondrial (447 aa).

The transit peptide at 1–63 directs the protein to the mitochondrion; sequence MNRRHLFAWL…LLNKNCSRRY (63 aa). The segment at 299-363 is GGQ domain; the sequence is PKDLRIDTFR…LRARLYQQII (65 aa). The GGQ motif lies at 313-315; that stretch reads GGQ. Q315 carries the N5-methylglutamine modification.

The protein belongs to the prokaryotic/mitochondrial release factor family. In terms of processing, methylation of glutamine in the GGQ triplet by HEMK1 is conserved from bacteria to mammals.

Its subcellular location is the mitochondrion. Mitochondrial peptide chain release factor that directs the termination of translation in response to the peptide chain non-canonical stop codons AGG and AGA. Non-canonical termination codons AGG and AGA are found at the end of MT-CO1/COX1 and MT-ND6/ND6 open reading frames, respectively. Recognizes non-canonical stop codons via a network of interactions between the codon, MTRF1 and the ribosomal RNA (rRNA): in contrast to other translation release factors, which identify the codon in the A-site via direct interactions of amino acid side chains with the bases, MTRF1 repositions the first 2 bases of the stop codon to use an intricate network of interactions that includes residues of the release factor, the rRNA of the small ribosomal subunit, as well as neighboring bases of the mRNA. The polypeptide is Peptide chain release factor 1, mitochondrial (MTRF1) (Bos taurus (Bovine)).